The chain runs to 1018 residues: Collagen, type I, alpha 1a (1018 aa).

Over residues 1–10 the composition is skewed to basic and acidic residues; sequence QMSAGYDDKS. The interval 1-991 is disordered; sequence QMSAGYDDKS…SGEYWLDPDQ (991 aa). The span at 13-30 shows a compositional bias: pro residues; it reads MPVPGPMGPMGPRGPPGS. The segment covering 31 to 58 has biased composition (low complexity); it reads PGASGPQGFTGPPGEPGEAGPSGAMGPR. Residues 67–81 show a composition bias toward basic and acidic residues; that stretch reads NGEDGESGKPGRGGE. The span at 126–136 shows a compositional bias: low complexity; it reads PRGNDGAAGAA. A compositionally biased stretch (pro residues) spans 138-151; it reads PPGPTGPAGPPGFP. A compositionally biased stretch (gly residues) spans 152–170; the sequence is GGPGAKGDAGAQGGRGPEG. Composition is skewed to low complexity over residues 171-214 and 223-261; these read PAGA…AGAP and SGPQ…APGV. Positions 284 to 296 are enriched in gly residues; the sequence is GARGGPGGRGFPG. Composition is skewed to low complexity over residues 370 to 385, 424 to 442, 452 to 510, and 543 to 558; these read VGAR…PGPK, AGPA…PGFQ, LPGE…QGMP, and RGLT…AGAT. Residues 568–577 show a composition bias toward gly residues; the sequence is GPVGPGGARG. Composition is skewed to low complexity over residues 591–627 and 641–663; these read AGFA…AGPT and PKGA…AGRV. Residues 665–677 are compositionally biased toward pro residues; sequence PPGPSGNPGPPGP. 2 stretches are compositionally biased toward low complexity: residues 701–746 and 775–795; these read EVGA…XXPG and PGLA…NEGS. Pro residues predominate over residues 819 to 829; it reads APGPPGAPGPV. A compositionally biased stretch (low complexity) spans 843 to 862; sequence PAGPAGSAGPAGPRGPAGAP. Residues 865-876 show a composition bias toward basic and acidic residues; it reads RGDKGESGEAGE. The segment covering 889–925 has biased composition (low complexity); that stretch reads SGSSGEQGPAGAAGPAGPRGPAGSAGSPGKDGMSGLP. Residues 932-1018 form the Fibrillar collagen NC1 domain; that stretch reads GPRGGFDLGF…CTSHTGTWGK (87 aa). Residues 948 to 959 are compositionally biased toward basic and acidic residues; sequence KAPDPFRDRDLE. Residues 963-973 are compositionally biased toward polar residues; it reads TLKSLSQQLEQ.

This sequence belongs to the fibrillar collagen family.

The protein localises to the secreted. Its subcellular location is the extracellular space. It is found in the extracellular matrix. The sequence is that of Collagen, type I, alpha 1a from Epinephelus costae (Goldblotch grouper).